Here is a 729-residue protein sequence, read N- to C-terminus: Golgin subfamily A member 5 (729 aa).

N-acetylserine is present on serine 2. Residues serine 2–arginine 696 lie on the Cytoplasmic side of the membrane. Arginine 27 and arginine 89 each carry dimethylated arginine. 2 disordered regions span residues arginine 89–leucine 222 and serine 626–glycine 645. Phosphoserine is present on serine 116. Residues proline 134–arginine 146 are compositionally biased toward basic and acidic residues. Low complexity predominate over residues proline 148–threonine 167. 2 stretches are compositionally biased toward polar residues: residues glycine 175–serine 186 and serine 626–asparagine 638. The stretch at glycine 215–serine 629 forms a coiled coil. A helical; Anchor for type IV membrane protein transmembrane segment spans residues valine 697–tyrosine 717. Residues serine 718–lysine 729 lie on the Lumenal side of the membrane.

In terms of assembly, homodimer. Interacts with RAB1A that has been activated by GTP-binding. Interacts with isoform CASP of CUX1. Highly phosphorylated during mitosis. Phosphorylation is barely detectable during interphase.

Its subcellular location is the golgi apparatus membrane. Functionally, involved in maintaining Golgi structure. Stimulates the formation of Golgi stacks and ribbons. Involved in intra-Golgi retrograde transport. The polypeptide is Golgin subfamily A member 5 (Golga5) (Mus musculus (Mouse)).